The following is a 337-amino-acid chain: o-succinylbenzoate synthase (337 aa).

The Proton donor role is filled by Lys-142. Mg(2+) contacts are provided by Asp-170, Glu-199, and Asp-222. The Proton acceptor role is filled by Lys-248.

The protein belongs to the mandelate racemase/muconate lactonizing enzyme family. MenC type 1 subfamily. It depends on a divalent metal cation as a cofactor.

It carries out the reaction (1R,6R)-6-hydroxy-2-succinyl-cyclohexa-2,4-diene-1-carboxylate = 2-succinylbenzoate + H2O. Its pathway is quinol/quinone metabolism; 1,4-dihydroxy-2-naphthoate biosynthesis; 1,4-dihydroxy-2-naphthoate from chorismate: step 4/7. It functions in the pathway quinol/quinone metabolism; menaquinone biosynthesis. Its function is as follows. Converts 2-succinyl-6-hydroxy-2,4-cyclohexadiene-1-carboxylate (SHCHC) to 2-succinylbenzoate (OSB). This is o-succinylbenzoate synthase from Pasteurella multocida (strain Pm70).